The following is a 405-amino-acid chain: Arginine biosynthesis bifunctional protein ArgJ, mitochondrial (405 aa).

Substrate is bound by residues threonine 174, lysine 200, threonine 211, and glutamate 300. Catalysis depends on threonine 211, which acts as the Nucleophile.

The protein belongs to the ArgJ family. In terms of assembly, heterodimer of an alpha and a beta chain. The alpha and beta chains are autoproteolytically processed from a single precursor protein within the mitochondrion.

The protein resides in the mitochondrion matrix. The catalysed reaction is N(2)-acetyl-L-ornithine + L-glutamate = N-acetyl-L-glutamate + L-ornithine. It catalyses the reaction L-glutamate + acetyl-CoA = N-acetyl-L-glutamate + CoA + H(+). It functions in the pathway amino-acid biosynthesis; L-arginine biosynthesis; L-ornithine and N-acetyl-L-glutamate from L-glutamate and N(2)-acetyl-L-ornithine (cyclic): step 1/1. It participates in amino-acid biosynthesis; L-arginine biosynthesis; N(2)-acetyl-L-ornithine from L-glutamate: step 1/4. Functionally, catalyzes two activities which are involved in the cyclic version of arginine biosynthesis: the synthesis of acetylglutamate from glutamate and acetyl-CoA, and of ornithine by transacetylation between acetylornithine and glutamate. The polypeptide is Arginine biosynthesis bifunctional protein ArgJ, mitochondrial (Candida tropicalis (strain ATCC MYA-3404 / T1) (Yeast)).